The chain runs to 400 residues: MDIGTINFNYQSRAVYSAHPQTSRGRLFHEKMNTARTPFQRDRDRIIHSNAFRRLKHKTQVFIADESDHYRTRLTHSIEVSQIARTLARALYLDEDLTEAIALVHDFGHTPFGHAGEEALNEAMMQYGGFDHNAQALRIVTKLEQRYANFDGLNLTWETLEGLVKHNGPLLGPYAKNKEVPSDILQYNAKQDLALDCFAGLEAQCAAIADDIAYNAHDIDDGLRSQFLTLDQFEHVPLTAAILKEITDEHPQLDQARCGYTLVRRQITTMIEDVLKQSHENLARIKPTSINDIYQAKQTIVTFSPSMTVYEKELKNFLFENLYYHEQILSRRNAAKCIVQKLFNCYYENPDTMPESWCQKAVHLKNQELARLIADFLSGMSDHYALREYHRLFDHTNHFV.

An HD domain is found at 73–215; sequence RLTHSIEVSQ…AAIADDIAYN (143 aa).

This sequence belongs to the dGTPase family. Type 2 subfamily.

This is Deoxyguanosinetriphosphate triphosphohydrolase-like protein from Bartonella tribocorum (strain CIP 105476 / IBS 506).